The primary structure comprises 120 residues: Ribosome-binding factor A (120 aa).

Belongs to the RbfA family. In terms of assembly, monomer. Binds 30S ribosomal subunits, but not 50S ribosomal subunits or 70S ribosomes.

Its subcellular location is the cytoplasm. Its function is as follows. One of several proteins that assist in the late maturation steps of the functional core of the 30S ribosomal subunit. Associates with free 30S ribosomal subunits (but not with 30S subunits that are part of 70S ribosomes or polysomes). Required for efficient processing of 16S rRNA. May interact with the 5'-terminal helix region of 16S rRNA. In Rickettsia conorii (strain ATCC VR-613 / Malish 7), this protein is Ribosome-binding factor A.